We begin with the raw amino-acid sequence, 323 residues long: Ubiquinone biosynthesis protein COQ4, mitochondrial (323 aa).

A mitochondrion-targeting transit peptide spans 1-29 (MLKSTVSNTRIKCCRIDQRRNYLFTALAS). Residues histidine 205, aspartate 206, histidine 209, and glutamate 221 each coordinate Zn(2+).

It belongs to the COQ4 family. Component of a multi-subunit COQ enzyme complex, composed of at least COQ3, COQ4, COQ5, COQ6, COQ7 and COQ9. It depends on Zn(2+) as a cofactor.

Its subcellular location is the mitochondrion inner membrane. The enzyme catalyses a 4-hydroxy-3-methoxy-5-(all-trans-polyprenyl)benzoate + H(+) = a 2-methoxy-6-(all-trans-polyprenyl)phenol + CO2. It functions in the pathway cofactor biosynthesis; ubiquinone biosynthesis. Lyase that catalyzes the C1-decarboxylation of 4-hydroxy-3-methoxy-5-(all-trans-polyprenyl)benzoic acid into 2-methoxy-6-(all-trans-polyprenyl)phenol during ubiquinone biosynthesis. This chain is Ubiquinone biosynthesis protein COQ4, mitochondrial, found in Candida dubliniensis (strain CD36 / ATCC MYA-646 / CBS 7987 / NCPF 3949 / NRRL Y-17841) (Yeast).